The primary structure comprises 195 residues: Thymidine kinase (195 aa).

ATP is bound by residues 15–22 (GSMFSGKS) and 88–91 (DEVQ). Catalysis depends on E89, which acts as the Proton acceptor. Position 120 (F120) interacts with substrate. Residues C145 and C148 each coordinate Zn(2+). Substrate contacts are provided by residues 170 to 174 (IILVG) and Y179. C183 and C186 together coordinate Zn(2+).

Belongs to the thymidine kinase family. Homotetramer.

The protein resides in the cytoplasm. It carries out the reaction thymidine + ATP = dTMP + ADP + H(+). This is Thymidine kinase from Bacillus cereus (strain ATCC 14579 / DSM 31 / CCUG 7414 / JCM 2152 / NBRC 15305 / NCIMB 9373 / NCTC 2599 / NRRL B-3711).